Reading from the N-terminus, the 327-residue chain is Glycerol-3-phosphate acyltransferase (327 aa).

The next 5 helical transmembrane spans lie at 3–23 (SLLWLAVAYVMGSIPFGLLFA), 52–72 (VGVLTLVCDALKGAIPVAVAL), 78–98 (TVFHSLTALAALLGHLYSCFL), 112–132 (VFLPLAFWPLVLSGIACLAVI), and 152–172 (MLLLGGHWKLVPLALVVMVLV). 2 disordered regions span residues 184-212 (SRGEEKPWQKKHHDAAQGTDAGAAPEAAA) and 233-327 (PSTE…SSGQ). Residues 199 to 212 (AQGTDAGAAPEAAA) are compositionally biased toward low complexity. Residues 237-246 (AAPSQETSDA) are compositionally biased toward polar residues. Residues 259–271 (EGDKRENEEHDNA) show a composition bias toward basic and acidic residues.

Belongs to the PlsY family. In terms of assembly, probably interacts with PlsX.

It localises to the cell inner membrane. The enzyme catalyses an acyl phosphate + sn-glycerol 3-phosphate = a 1-acyl-sn-glycero-3-phosphate + phosphate. It participates in lipid metabolism; phospholipid metabolism. Functionally, catalyzes the transfer of an acyl group from acyl-phosphate (acyl-PO(4)) to glycerol-3-phosphate (G3P) to form lysophosphatidic acid (LPA). This enzyme utilizes acyl-phosphate as fatty acyl donor, but not acyl-CoA or acyl-ACP. This Nitratidesulfovibrio vulgaris (strain ATCC 29579 / DSM 644 / CCUG 34227 / NCIMB 8303 / VKM B-1760 / Hildenborough) (Desulfovibrio vulgaris) protein is Glycerol-3-phosphate acyltransferase.